The following is a 72-amino-acid chain: Translation initiation factor IF-1 (72 aa).

One can recognise an S1-like domain in the interval 1 to 72 (MAKEELLEFP…TKGRITYRFK (72 aa)).

This sequence belongs to the IF-1 family. In terms of assembly, component of the 30S ribosomal translation pre-initiation complex which assembles on the 30S ribosome in the order IF-2 and IF-3, IF-1 and N-formylmethionyl-tRNA(fMet); mRNA recruitment can occur at any time during PIC assembly.

The protein localises to the cytoplasm. One of the essential components for the initiation of protein synthesis. Stabilizes the binding of IF-2 and IF-3 on the 30S subunit to which N-formylmethionyl-tRNA(fMet) subsequently binds. Helps modulate mRNA selection, yielding the 30S pre-initiation complex (PIC). Upon addition of the 50S ribosomal subunit IF-1, IF-2 and IF-3 are released leaving the mature 70S translation initiation complex. The protein is Translation initiation factor IF-1 of Caulobacter vibrioides (strain ATCC 19089 / CIP 103742 / CB 15) (Caulobacter crescentus).